The sequence spans 410 residues: Probable serine/threonine-protein kinase PBL8 (410 aa).

A compositionally biased stretch (basic and acidic residues) spans 1 to 10 (MGNCGTRDEA). The disordered stretch occupies residues 1–45 (MGNCGTRDEAAVFTPQAQAQQLQKKHSRSVSDLSDPSTPRFRDDS). G2 carries the N-myristoyl glycine lipid modification. A lipid anchor (S-palmitoyl cysteine) is attached at C4. T58 bears the Phosphothreonine mark. A Protein kinase domain is found at 69 to 350 (FRPDYILGEG…DVVETLEPLQ (282 aa)). ATP is bound by residues 75–83 (LGEGGFGTV) and K104. Y149 is modified (phosphotyrosine). Residue D199 is the Proton acceptor of the active site. Residues S203 and S233 each carry the phosphoserine modification. Residues T234 and T239 each carry the phosphothreonine modification. Phosphotyrosine is present on Y247.

The protein belongs to the protein kinase superfamily. Ser/Thr protein kinase family. Interacts with the Xanthomonas campestris effector XopAC/AvrAC.

The protein resides in the cell membrane. It carries out the reaction L-seryl-[protein] + ATP = O-phospho-L-seryl-[protein] + ADP + H(+). It catalyses the reaction L-threonyl-[protein] + ATP = O-phospho-L-threonyl-[protein] + ADP + H(+). In terms of biological role, may be involved in plant defense signaling. This is Probable serine/threonine-protein kinase PBL8 from Arabidopsis thaliana (Mouse-ear cress).